Consider the following 141-residue polypeptide: Nucleoside diphosphate kinase (141 aa).

Positions 11, 59, 87, 93, 104, and 114 each coordinate ATP. Catalysis depends on His-117, which acts as the Pros-phosphohistidine intermediate.

Belongs to the NDK family. In terms of assembly, homotetramer. Mg(2+) is required as a cofactor.

The protein localises to the cytoplasm. It carries out the reaction a 2'-deoxyribonucleoside 5'-diphosphate + ATP = a 2'-deoxyribonucleoside 5'-triphosphate + ADP. The catalysed reaction is a ribonucleoside 5'-diphosphate + ATP = a ribonucleoside 5'-triphosphate + ADP. Its function is as follows. Major role in the synthesis of nucleoside triphosphates other than ATP. The ATP gamma phosphate is transferred to the NDP beta phosphate via a ping-pong mechanism, using a phosphorylated active-site intermediate. This Proteus mirabilis (strain HI4320) protein is Nucleoside diphosphate kinase.